A 154-amino-acid chain; its full sequence is Myoglobin-2 (154 aa).

One can recognise a Globin domain in the interval 2–148 (GLSDGEWQLV…FRKDIATKYK (147 aa)). His65 is a binding site for nitrite. Residue His65 coordinates O2. His94 provides a ligand contact to heme b.

Belongs to the globin family. In terms of assembly, monomeric.

It is found in the cytoplasm. It localises to the sarcoplasm. The enzyme catalyses Fe(III)-heme b-[protein] + nitric oxide + H2O = Fe(II)-heme b-[protein] + nitrite + 2 H(+). It carries out the reaction H2O2 + AH2 = A + 2 H2O. In terms of biological role, monomeric heme protein which primary function is to store oxygen and facilitate its diffusion within muscle tissues. Reversibly binds oxygen through a pentacoordinated heme iron and enables its timely and efficient release as needed during periods of heightened demand. Depending on the oxidative conditions of tissues and cells, and in addition to its ability to bind oxygen, it also has a nitrite reductase activity whereby it regulates the production of bioactive nitric oxide. Under stress conditions, like hypoxia and anoxia, it also protects cells against reactive oxygen species thanks to its pseudoperoxidase activity. The protein is Myoglobin-2 (MB2) of Stenella attenuata (Pantropical spotted dolphin).